Consider the following 225-residue polypeptide: Global nitrogen regulator (225 aa).

9 to 131 (RPLAAVFRRL…LLMLQGLSSR (123 aa)) is an a nucleoside 3',5'-cyclic phosphate binding site. The HTH crp-type domain occupies 145–218 (RDMGSRLVSF…KKKITVHNPV (74 aa)). Residues 177–196 (SHQAIAEAIGSTRVTVTRLL) constitute a DNA-binding region (H-T-H motif).

Required for full expression of proteins subject to ammonium repression. Transcriptional activator of genes subject to nitrogen control. This Synechocystis sp. (strain ATCC 27184 / PCC 6803 / Kazusa) protein is Global nitrogen regulator (ntcA).